A 157-amino-acid chain; its full sequence is Ribonuclease H (157 aa).

In terms of domain architecture, RNase H type-1 spans 3–144 (ELKQLYIFTD…CDVLARKAAE (142 aa)). Aspartate 12, glutamate 50, aspartate 72, and aspartate 136 together coordinate Mg(2+).

Belongs to the RNase H family. Monomer. It depends on Mg(2+) as a cofactor.

The protein localises to the cytoplasm. The enzyme catalyses Endonucleolytic cleavage to 5'-phosphomonoester.. Its function is as follows. Endonuclease that specifically degrades the RNA of RNA-DNA hybrids. The chain is Ribonuclease H from Shewanella frigidimarina (strain NCIMB 400).